Reading from the N-terminus, the 1033-residue chain is Isoleucine--tRNA ligase 2 (1033 aa).

The short motif at 47-57 (PTANGLPHVGH) is the 'HIGH' region element. The 'KMSKS' region motif lies at 590-594 (KMSKS). Lys-593 provides a ligand contact to ATP.

The protein belongs to the class-I aminoacyl-tRNA synthetase family. IleS type 2 subfamily. In terms of assembly, monomer. It depends on Zn(2+) as a cofactor.

Its subcellular location is the cytoplasm. It carries out the reaction tRNA(Ile) + L-isoleucine + ATP = L-isoleucyl-tRNA(Ile) + AMP + diphosphate. Its function is as follows. Catalyzes the attachment of isoleucine to tRNA(Ile). As IleRS can inadvertently accommodate and process structurally similar amino acids such as valine, to avoid such errors it has two additional distinct tRNA(Ile)-dependent editing activities. One activity is designated as 'pretransfer' editing and involves the hydrolysis of activated Val-AMP. The other activity is designated 'posttransfer' editing and involves deacylation of mischarged Val-tRNA(Ile). This chain is Isoleucine--tRNA ligase 2, found in Bacillus cereus (strain ZK / E33L).